Consider the following 222-residue polypeptide: Orotate phosphoribosyltransferase (222 aa).

Lys-29 is a binding site for 5-phospho-alpha-D-ribose 1-diphosphate. 37 to 38 is an orotate binding site; it reads FF. 5-phospho-alpha-D-ribose 1-diphosphate is bound by residues 75-76, Arg-101, Lys-102, Lys-105, His-107, and 126-134; these read YK and DDVISAGTS. Positions 130 and 158 each coordinate orotate.

Belongs to the purine/pyrimidine phosphoribosyltransferase family. PyrE subfamily. Homodimer. Mg(2+) serves as cofactor.

The enzyme catalyses orotidine 5'-phosphate + diphosphate = orotate + 5-phospho-alpha-D-ribose 1-diphosphate. The protein operates within pyrimidine metabolism; UMP biosynthesis via de novo pathway; UMP from orotate: step 1/2. Functionally, catalyzes the transfer of a ribosyl phosphate group from 5-phosphoribose 1-diphosphate to orotate, leading to the formation of orotidine monophosphate (OMP). The protein is Orotate phosphoribosyltransferase of Polynucleobacter asymbioticus (strain DSM 18221 / CIP 109841 / QLW-P1DMWA-1) (Polynucleobacter necessarius subsp. asymbioticus).